The following is a 164-amino-acid chain: Vesiculogenesis and immune response regulator (164 aa).

Post-translationally, could be O-mannosylated. Is likely mannosylated on Thr-61 when overexpressed in M.smegmatis.

The protein resides in the cell inner membrane. It localises to the cytoplasm. Virulence factor that regulates vesiculogenesis. Acts by regulating the production of mycobacterial membrane vesicles (MV) bearing Toll-like receptor 2 (TLR2) ligands, including the lipoproteins LpqH, a major host TLR2 agonist, and SodC. By restraining the release of most of the material that activates host cells through TLR2, VirR reduces the immunostimulant potential of M.tuberculosis and increases its virulence. May contribute to cell envelope integrity. Functionally, when overexpressed in M.smegmatis, it modulates the production of IL-10, IL-12 p40 and TNF-alpha by RAW264.7 macrophages and it decreases the killing of M.smegmatis. The chain is Vesiculogenesis and immune response regulator from Mycobacterium tuberculosis (strain ATCC 25618 / H37Rv).